The sequence spans 214 residues: External core antigen (214 aa).

The signal sequence occupies residues 1–19 (MQLFHLCLIISCTCPTVQA). Residues 25–27 (GWL) are HBEAG. The interval 165 to 214 (NAPILSTLPETTVVRRRDRGRSPRRRTPSPRRRRSQSPRRRRSQSRESQC) is disordered. Residues 178–207 (VRRRDRGRSPRRRTPSPRRRRSQSPRRRRS) are compositionally biased toward basic residues. The stretch at 186–192 (SPRRRTP) is one 1; half-length repeat. A 3 X 8 AA repeats of S-P-R-R-R-R-S-Q region spans residues 186-208 (SPRRRTPSPRRRRSQSPRRRRSQ). The propeptide occupies 186–214 (SPRRRTPSPRRRRSQSPRRRRSQSRESQC). 2 tandem repeats follow at residues 193–200 (SPRRRRSQ) and 201–208 (SPRRRRSQ).

This sequence belongs to the orthohepadnavirus precore antigen family. In terms of assembly, homodimerizes. In terms of processing, phosphorylated. Cleaved by host furin.

It localises to the secreted. The protein localises to the host nucleus. Functionally, may regulate immune response to the intracellular capsid in acting as a T-cell tolerogen, by having an immunoregulatory effect which prevents destruction of infected cells by cytotoxic T-cells. This immune regulation may predispose to chronicity during perinatal infections and prevent severe liver injury during adult infections. The chain is External core antigen from Homo sapiens (Human).